Consider the following 296-residue polypeptide: Porphobilinogen deaminase (296 aa).

Cys-232 is subject to S-(dipyrrolylmethanemethyl)cysteine.

The protein belongs to the HMBS family. As to quaternary structure, monomer. It depends on dipyrromethane as a cofactor.

The catalysed reaction is 4 porphobilinogen + H2O = hydroxymethylbilane + 4 NH4(+). The protein operates within porphyrin-containing compound metabolism; protoporphyrin-IX biosynthesis; coproporphyrinogen-III from 5-aminolevulinate: step 2/4. Tetrapolymerization of the monopyrrole PBG into the hydroxymethylbilane pre-uroporphyrinogen in several discrete steps. In Corynebacterium aurimucosum (strain ATCC 700975 / DSM 44827 / CIP 107346 / CN-1) (Corynebacterium nigricans), this protein is Porphobilinogen deaminase.